The sequence spans 71 residues: Protein YqgC (71 aa).

The sequence is that of Protein YqgC (yqgC) from Escherichia coli (strain K12).